The following is a 478-amino-acid chain: MKEKKLWGGRFDAAPSSLMIRIGESISFDQELYRHDIEGSISHSRMLRRIGILSESEQRKIETGLGQIKKEIDSGKFEFKIENEDIHMSIESRLTELLGDLGKKLHTGRSRNDQVSQDVRLYIKSEMHSILILVYDLLTVWLKKAEAHTKTIIPGYTHLQIAQPIRASHYFLSHFWANVRDFEDFYSAFERADELVLGSGALAGVNYETDREYLRKDLNLARMSENSMDAVSQRDHIFKFLFASSQFMVHASRFCEEIILYTSQEFSYFKLPDHLTTGSSIMPQKKNPDVAELIRGKAGRVIGNLTHLLVMLKGTPLSYNRDFQEDKIPLFDTVKQIKICTEGIRDMVEGIQIFPENATRSLRNGFSTATDLADWLVSAKGIPFRSAHEIVGELVKHCSMKGYDLFTIPSGERGQIHAVLTDPGYEAAISLETSCDKKDVFGGTALPRQKEQIKRAKAKLNELTKKLKQIESKGKKTI.

Belongs to the lyase 1 family. Argininosuccinate lyase subfamily.

It is found in the cytoplasm. The enzyme catalyses 2-(N(omega)-L-arginino)succinate = fumarate + L-arginine. Its pathway is amino-acid biosynthesis; L-arginine biosynthesis; L-arginine from L-ornithine and carbamoyl phosphate: step 3/3. The sequence is that of Argininosuccinate lyase from Leptospira biflexa serovar Patoc (strain Patoc 1 / Ames).